Reading from the N-terminus, the 109-residue chain is RNA-binding protein Hfq (109 aa).

Positions aspartate 9–valine 68 constitute a Sm domain.

Belongs to the Hfq family. Homohexamer.

In terms of biological role, RNA chaperone that binds small regulatory RNA (sRNAs) and mRNAs to facilitate mRNA translational regulation in response to envelope stress, environmental stress and changes in metabolite concentrations. Also binds with high specificity to tRNAs. In Francisella philomiragia subsp. philomiragia (strain ATCC 25017 / CCUG 19701 / FSC 153 / O#319-036), this protein is RNA-binding protein Hfq.